A 736-amino-acid chain; its full sequence is MRPDEEDGTTKSPGSRWTRIWAIIALILLILFLLVLGAAIYFYINYKDSSDVCLSPGCIKTASVILSSMNSSVDPCDDFYEFACGQWIKGHPIPDDAPSVSNFENLGQDLEFALKELLDENDEPYDYETSAVGKAKYFYNLCLNESEILDNWRTTFDEVVKSFGGWPSLGHQMKPDASIEMLYADMVAKFKADSLFKATVQPDDKNSQRHVLLIDQPQLNLFARDFYVAAENEERMAYLQLIRDVLILLDADRTRATLDAKEIIDFETALANITMADEHRHDIAELYTKITLGEMRRSLPHFNWPLFFNRMFKDLHEKNGKRITFDDNTEVVVYGYEFLRRLDVLIPQYDNRLIVNYLEWCWFFKTMLRDLPDPFALTIFKFYKTLNIMNVQKVRWHGCVTRINSLMPMATSAIYVKNHFDHEAKQQVEEMISLIMESFVDLLLSEDWLTKETKQTAKQKVNEMKRKIGYPDYLNDPAAVNNEYKTFKVYPGHYYQTKFSFYEQYQRDVLERITEAVDRERWVAGAALVNAFYSPNTNEIIFPAGILQPVFYSKDFPSSMNFGGIGVVIGHEITHGFDDRGRLYDNLGNIRQWWDNATISKFEHKAQCIEKQYSSYVLDQINMQINGKSTKGENIADNGGLKQAYRAYKKYEKRHSRPPRLPGVNLTHDQLFFLNYAQIWCGTMNDKEAIRKLRTSEHSPGPIRVKGPLSNSYDFAKAYNCEPGSQMNPREKCRVW.

The Cytoplasmic segment spans residues 1–19 (MRPDEEDGTTKSPGSRWTR). Residues 20-40 (IWAIIALILLILFLLVLGAAI) traverse the membrane as a helical; Signal-anchor for type II membrane protein segment. Topologically, residues 41–736 (YFYINYKDSS…MNPREKCRVW (696 aa)) are extracellular. In terms of domain architecture, Peptidase M13 spans 52 to 736 (VCLSPGCIKT…MNPREKCRVW (685 aa)). Cystine bridges form between cysteine 53-cysteine 58, cysteine 76-cysteine 721, cysteine 84-cysteine 681, cysteine 142-cysteine 399, and cysteine 608-cysteine 733. A coiled-coil region spans residues 103-123 (FENLGQDLEFALKELLDENDE). Zn(2+) is bound at residue histidine 571. The active site involves glutamate 572. Zn(2+) is bound by residues histidine 575 and glutamate 633. Aspartate 637 acts as the Proton donor in catalysis.

This sequence belongs to the peptidase M13 family. Zn(2+) serves as cofactor. In terms of tissue distribution, expressed in muscle cells, GLR cells, SMB motor neurons and AIM interneurons.

The protein localises to the membrane. Functionally, required for olfactory plasticity, which is the change from positive chemotaxis to dispersal after prolonged exposure to an odorant. Thought to antagonise snet-1 by degrading excess snet-1 peptides and thus enabling olfactory plasticity. In Caenorhabditis elegans, this protein is Neprilysin-2.